Here is a 75-residue protein sequence, read N- to C-terminus: U6-lycotoxin-Ls1c (75 aa).

An N-terminal signal peptide occupies residues 1 to 21; it reads MKLLLFTALVLVVISLIEVEA. A propeptide spanning residues 22–25 is cleaved from the precursor; that stretch reads ENER. Cystine bridges form between cysteine 27–cysteine 42, cysteine 34–cysteine 47, cysteine 41–cysteine 65, and cysteine 49–cysteine 63.

It belongs to the neurotoxin 19 (CSTX) family. 06 (U6-Lctx) subfamily. As to expression, expressed by the venom gland.

It localises to the secreted. The sequence is that of U6-lycotoxin-Ls1c from Lycosa singoriensis (Wolf spider).